Consider the following 155-residue polypeptide: Endoribonuclease YbeY (155 aa).

H119, H123, and H129 together coordinate Zn(2+).

The protein belongs to the endoribonuclease YbeY family. Zn(2+) serves as cofactor.

It localises to the cytoplasm. Single strand-specific metallo-endoribonuclease involved in late-stage 70S ribosome quality control and in maturation of the 3' terminus of the 16S rRNA. In Mycoplasmopsis synoviae (strain 53) (Mycoplasma synoviae), this protein is Endoribonuclease YbeY.